The following is a 147-amino-acid chain: SsrA-binding protein (147 aa).

The protein belongs to the SmpB family.

The protein localises to the cytoplasm. Its function is as follows. Required for rescue of stalled ribosomes mediated by trans-translation. Binds to transfer-messenger RNA (tmRNA), required for stable association of tmRNA with ribosomes. tmRNA and SmpB together mimic tRNA shape, replacing the anticodon stem-loop with SmpB. tmRNA is encoded by the ssrA gene; the 2 termini fold to resemble tRNA(Ala) and it encodes a 'tag peptide', a short internal open reading frame. During trans-translation Ala-aminoacylated tmRNA acts like a tRNA, entering the A-site of stalled ribosomes, displacing the stalled mRNA. The ribosome then switches to translate the ORF on the tmRNA; the nascent peptide is terminated with the 'tag peptide' encoded by the tmRNA and targeted for degradation. The ribosome is freed to recommence translation, which seems to be the essential function of trans-translation. In Thermosipho melanesiensis (strain DSM 12029 / CIP 104789 / BI429), this protein is SsrA-binding protein.